Consider the following 573-residue polypeptide: Chaperone Ric-8 (573 aa).

A compositionally biased stretch (basic and acidic residues) spans 308-324; that stretch reads ESHKEREQDNEKEKDTE. Disordered regions lie at residues 308–329 and 473–493; these read ESHK…GAGA and GTDY…QQQQ. Residues Ser-477, Ser-478, Ser-480, and Ser-483 each carry the phosphoserine modification.

This sequence belongs to the synembryn family. In terms of assembly, interacts with GDP-bound G(i)-alpha protein G-i-alpha-65A. Does not interact with G-alpha proteins when they are in complex with subunits beta and gamma. Interacts with Frq2 in a Ca(2+)-independent manner but does not interact with Frq1. Expression in the embryo is primarily neural.

It localises to the cytoplasm. The protein localises to the cell cortex. The protein resides in the presynapse. Functionally, chaperone that specifically binds and folds some, but not all, nascent G alpha proteins prior to G protein heterotrimer formation, promoting their stability and activity. Also acts as a guanine nucleotide exchange factor (GEF) for G alpha proteins by stimulating exchange of bound GDP for free GTP. Plays a key role in asymmetric spindle positioning, a step for asymmetric cell division that generates cell diversity during development by activating G(i) alpha protein independently of G-protein coupled receptors. Required during gastrulation and sensory organ precursor (SOP) formation. Plays a role in positively regulating synapse number and neurotransmitter release. The polypeptide is Chaperone Ric-8 (ric8a) (Drosophila melanogaster (Fruit fly)).